We begin with the raw amino-acid sequence, 104 residues long: uncharacterized protein (104 aa).

This is an uncharacterized protein from Galliformes (FAdV-1).